Consider the following 408-residue polypeptide: Serine/threonine transporter SstT (408 aa).

Helical transmembrane passes span 11–31 (LANGSLVLQILVGIIAGVSLA), 43–63 (FLGSLFVGALKAIAPILVFIL), 82–102 (IVVLYLFGTFAAALTAVLLSM), 141–161 (ALMTGNYIGILAWGVGLGLAL), 192–212 (IGIFGLVAATFAETGFAAIAG), 216–236 (LLAVLLGAMAIIALIVNPLIV), 298–318 (MGGAAITITVLTLAAAHTLGI), 339–359 (ASGVAGGSLLLIPLACSLFGI), and 363–383 (VAMQVVAVGFIIGVIQDAAET).

The protein belongs to the dicarboxylate/amino acid:cation symporter (DAACS) (TC 2.A.23) family.

The protein localises to the cell inner membrane. The enzyme catalyses L-serine(in) + Na(+)(in) = L-serine(out) + Na(+)(out). The catalysed reaction is L-threonine(in) + Na(+)(in) = L-threonine(out) + Na(+)(out). Its function is as follows. Involved in the import of serine and threonine into the cell, with the concomitant import of sodium (symport system). This is Serine/threonine transporter SstT from Shewanella sp. (strain MR-7).